The primary structure comprises 356 residues: UDP-N-acetylglucosamine--N-acetylmuramyl-(pentapeptide) pyrophosphoryl-undecaprenol N-acetylglucosamine transferase (356 aa).

Positions 198 and 289 each coordinate UDP-N-acetyl-alpha-D-glucosamine.

Belongs to the glycosyltransferase 28 family. MurG subfamily.

The protein resides in the cell membrane. The enzyme catalyses Mur2Ac(oyl-L-Ala-gamma-D-Glu-L-Lys-D-Ala-D-Ala)-di-trans,octa-cis-undecaprenyl diphosphate + UDP-N-acetyl-alpha-D-glucosamine = beta-D-GlcNAc-(1-&gt;4)-Mur2Ac(oyl-L-Ala-gamma-D-Glu-L-Lys-D-Ala-D-Ala)-di-trans,octa-cis-undecaprenyl diphosphate + UDP + H(+). It functions in the pathway cell wall biogenesis; peptidoglycan biosynthesis. Its function is as follows. Cell wall formation. Catalyzes the transfer of a GlcNAc subunit on undecaprenyl-pyrophosphoryl-MurNAc-pentapeptide (lipid intermediate I) to form undecaprenyl-pyrophosphoryl-MurNAc-(pentapeptide)GlcNAc (lipid intermediate II). The protein is UDP-N-acetylglucosamine--N-acetylmuramyl-(pentapeptide) pyrophosphoryl-undecaprenol N-acetylglucosamine transferase of Streptococcus thermophilus (strain ATCC BAA-491 / LMD-9).